Reading from the N-terminus, the 673-residue chain is UvrABC system protein B (673 aa).

Residues 26–183 (EGLEDGLAHQ…RRLAELQYTR (158 aa)) form the Helicase ATP-binding domain. An ATP-binding site is contributed by 39–46 (GVTGSGKT). Positions 92–115 (YYDYYQPEAYVPSSDTFIEKDASV) match the Beta-hairpin motif. Residues 431 to 597 (QVDDLLSEIR…GLNKKVVDIL (167 aa)) enclose the Helicase C-terminal domain. The tract at residues 608 to 627 (AKGRGKSRPIVEPDNVPMDM) is disordered. The UVR domain maps to 633–668 (QQKIHELEGLMMQHAQNLEFEEAAQIRDQLHQLREL).

It belongs to the UvrB family. Forms a heterotetramer with UvrA during the search for lesions. Interacts with UvrC in an incision complex.

It localises to the cytoplasm. In terms of biological role, the UvrABC repair system catalyzes the recognition and processing of DNA lesions. A damage recognition complex composed of 2 UvrA and 2 UvrB subunits scans DNA for abnormalities. Upon binding of the UvrA(2)B(2) complex to a putative damaged site, the DNA wraps around one UvrB monomer. DNA wrap is dependent on ATP binding by UvrB and probably causes local melting of the DNA helix, facilitating insertion of UvrB beta-hairpin between the DNA strands. Then UvrB probes one DNA strand for the presence of a lesion. If a lesion is found the UvrA subunits dissociate and the UvrB-DNA preincision complex is formed. This complex is subsequently bound by UvrC and the second UvrB is released. If no lesion is found, the DNA wraps around the other UvrB subunit that will check the other stand for damage. The sequence is that of UvrABC system protein B from Escherichia fergusonii (strain ATCC 35469 / DSM 13698 / CCUG 18766 / IAM 14443 / JCM 21226 / LMG 7866 / NBRC 102419 / NCTC 12128 / CDC 0568-73).